The following is a 115-amino-acid chain: Large ribosomal subunit protein bL20 (115 aa).

It belongs to the bacterial ribosomal protein bL20 family.

Binds directly to 23S ribosomal RNA and is necessary for the in vitro assembly process of the 50S ribosomal subunit. It is not involved in the protein synthesizing functions of that subunit. This chain is Large ribosomal subunit protein bL20, found in Prochlorococcus marinus (strain MIT 9301).